The primary structure comprises 69 residues: Alpha-conotoxin SrIA/SrIB (69 aa).

The signal sequence occupies residues 1–21 (MGMRMMFTVFLLVVLATTVVS). Residues 22–48 (FTSDSAFDSRNVAANDKVSDMIALTAR) constitute a propeptide that is removed on maturation. Cystine bridges form between C51/C57 and C52/C65. Residues 53 to 55 (SRP) are ser-Xaa-Pro motif, crucial for potent interaction with nAChR. P55 is subject to 4-hydroxyproline; in form Sr1A and Sr1B. The residue at position 60 (E60) is a 4-carboxyglutamate; in form Sr1A. Residue E63 is modified to 4-carboxyglutamate; in form Sr1A and Sr1B. Residue G66 is modified to Glycine amide; in form Sr1A and Sr1B.

Belongs to the conotoxin A superfamily. Post-translationally, occurs in 2 forms which differ in the post-translational modification of Glu-60. In form SrA1 Glu-60 is 4-carboxyglutamate while in form SrA2 Glu-60 is unmodified. As to expression, expressed by the venom duct.

The protein localises to the secreted. Alpha-conotoxins act on postsynaptic membranes, they bind to the nicotinic acetylcholine receptors (nAChR) and thus inhibit them. Has weak blocking effects on muscle nAChR composed of alpha-1/beta-1/gamma/delta subunits and the central nervous system nAChR composed of alpha-4/beta-2 subunits. Does not detectably affect the peripheral nervous system nAChR composed of alpha-3/beta-4 subunits. Low toxin concentrations potentiate currents in muscle nAChR composed of alpha-1/beta-1/gamma/delta subunits and central nervous system nAChR composed of alpha-4/beta-2 subunits, but not the peripheral nervous system nAChR composed of alpha-3/beta-4 subunits. The chain is Alpha-conotoxin SrIA/SrIB from Conus spurius (Alphabet cone).